The primary structure comprises 462 residues: Kinetochore protein Nuf2-A (462 aa).

Coiled coils occupy residues 143 to 277 (SSYK…DKCD) and 308 to 461 (EIHR…RLSR). The segment at 239–259 (RMKSQIVESPEQRKSKTERMK) is disordered. Over residues 248–259 (PEQRKSKTERMK) the composition is skewed to basic and acidic residues.

This sequence belongs to the NUF2 family. In terms of assembly, component of the NDC80 complex, which is composed of ndc80, cdca1, spbc24 and spbc25. The NDC80 complex interacts with mis12 and zwint.

The protein localises to the nucleus. It is found in the chromosome. It localises to the centromere. The protein resides in the kinetochore. Acts as a component of the essential kinetochore-associated NDC80 complex, which is required for chromosome segregation and spindle checkpoint activity. Required for kinetochore integrity and the organization of stable microtubule binding sites in the outer plate of the kinetochore. The NDC80 complex synergistically enhances the affinity of the SKA1 complex for microtubules and may allow the NDC80 complex to track depolymerizing microtubules. The chain is Kinetochore protein Nuf2-A (nuf2-a) from Xenopus laevis (African clawed frog).